The following is a 307-amino-acid chain: 4-hydroxy-tetrahydrodipicolinate synthase (307 aa).

Thr-49 is a pyruvate binding site. The Proton donor/acceptor role is filled by Tyr-138. Residue Lys-166 is the Schiff-base intermediate with substrate of the active site. Residue Ile-207 coordinates pyruvate.

Belongs to the DapA family. Homotetramer; dimer of dimers.

It localises to the cytoplasm. It carries out the reaction L-aspartate 4-semialdehyde + pyruvate = (2S,4S)-4-hydroxy-2,3,4,5-tetrahydrodipicolinate + H2O + H(+). The protein operates within amino-acid biosynthesis; L-lysine biosynthesis via DAP pathway; (S)-tetrahydrodipicolinate from L-aspartate: step 3/4. In terms of biological role, catalyzes the condensation of (S)-aspartate-beta-semialdehyde [(S)-ASA] and pyruvate to 4-hydroxy-tetrahydrodipicolinate (HTPA). This chain is 4-hydroxy-tetrahydrodipicolinate synthase, found in Limosilactobacillus reuteri (strain DSM 20016) (Lactobacillus reuteri).